The following is a 266-amino-acid chain: DNA-directed RNA polymerase subunit Rpo3 (266 aa).

C205, C208, and C211 together coordinate [3Fe-4S] cluster.

The protein belongs to the archaeal Rpo3/eukaryotic RPB3 RNA polymerase subunit family. Part of the RNA polymerase complex. [3Fe-4S] cluster is required as a cofactor.

The protein resides in the cytoplasm. The catalysed reaction is RNA(n) + a ribonucleoside 5'-triphosphate = RNA(n+1) + diphosphate. Functionally, DNA-dependent RNA polymerase (RNAP) catalyzes the transcription of DNA into RNA using the four ribonucleoside triphosphates as substrates. The polypeptide is DNA-directed RNA polymerase subunit Rpo3 (Methanosarcina mazei (strain ATCC BAA-159 / DSM 3647 / Goe1 / Go1 / JCM 11833 / OCM 88) (Methanosarcina frisia)).